We begin with the raw amino-acid sequence, 243 residues long: ATP-dependent dethiobiotin synthetase BioD (243 aa).

12 to 17 contributes to the ATP binding site; the sequence is DVGKTF. Thr16 provides a ligand contact to Mg(2+). The active site involves Lys37. Position 41 (Ser41) interacts with substrate. Residues Asp54, 115–118, and 179–180 contribute to the ATP site; these read EGCG and NM. Residues Asp54 and Glu115 each contribute to the Mg(2+) site.

The protein belongs to the dethiobiotin synthetase family. In terms of assembly, homodimer. The cofactor is Mg(2+).

Its subcellular location is the cytoplasm. The enzyme catalyses (7R,8S)-7,8-diammoniononanoate + CO2 + ATP = (4R,5S)-dethiobiotin + ADP + phosphate + 3 H(+). It participates in cofactor biosynthesis; biotin biosynthesis; biotin from 7,8-diaminononanoate: step 1/2. Its function is as follows. Catalyzes a mechanistically unusual reaction, the ATP-dependent insertion of CO2 between the N7 and N8 nitrogen atoms of 7,8-diaminopelargonic acid (DAPA, also called 7,8-diammoniononanoate) to form a ureido ring. This Caldicellulosiruptor bescii (strain ATCC BAA-1888 / DSM 6725 / KCTC 15123 / Z-1320) (Anaerocellum thermophilum) protein is ATP-dependent dethiobiotin synthetase BioD.